Consider the following 815-residue polypeptide: Lon protease 1 (815 aa).

One can recognise a Lon N-terminal domain in the interval 12 to 205 (VFVLALRDVV…HILKTIETEI (194 aa)). ATP is bound at residue 358 to 365 (GPPGVGKT). The Lon proteolytic domain maps to 594-775 (TNQIGQVAGL…DEVFKIALES (182 aa)). Catalysis depends on residues serine 681 and lysine 724.

The protein belongs to the peptidase S16 family. In terms of assembly, homohexamer. Organized in a ring with a central cavity.

The protein localises to the cytoplasm. It catalyses the reaction Hydrolysis of proteins in presence of ATP.. ATP-dependent serine protease that mediates the selective degradation of mutant and abnormal proteins as well as certain short-lived regulatory proteins. Required for cellular homeostasis and for survival from DNA damage and developmental changes induced by stress. Degrades polypeptides processively to yield small peptide fragments that are 5 to 10 amino acids long. Binds to DNA in a double-stranded, site-specific manner. This is Lon protease 1 from Hydrogenovibrio crunogenus (strain DSM 25203 / XCL-2) (Thiomicrospira crunogena).